The following is a 378-amino-acid chain: Alanine dehydrogenase (378 aa).

Residues Arg-15 and Lys-74 each coordinate substrate. His-95 serves as the catalytic Proton donor/acceptor. NAD(+) contacts are provided by residues Ser-132, 176 to 177 (VV), Asp-196, Ser-218, 237 to 238 (VL), 265 to 268 (VAID), and 297 to 300 (VANM). The Proton donor/acceptor role is filled by Asp-268.

Belongs to the AlaDH/PNT family. As to quaternary structure, homohexamer. Trimer of dimer.

The protein localises to the cytoplasm. The enzyme catalyses L-alanine + NAD(+) + H2O = pyruvate + NH4(+) + NADH + H(+). It participates in amino-acid degradation; L-alanine degradation via dehydrogenase pathway; NH(3) and pyruvate from L-alanine: step 1/1. Catalyzes the reversible oxidative deamination of L-alanine to pyruvate. Oxidative deamination proceeds through a sequential, ordered ternary-binary mechanism, where NAD(+) binds first followed by L-alanine; the products are released in the order ammonia, pyruvate and NADH. Disruption blocks sporulation probably in stage V; 20-30% sporulation can be restored if the media is supplemented with pyruvate, suggesting lack of pyruvate blocks sporulation. Thus it is a key factor in the assimilation of L-alanine as an energy source via the tricarboxylic acid cycle during sporulation. The protein is Alanine dehydrogenase of Bacillus subtilis (strain 168).